The following is a 421-amino-acid chain: ATP-dependent RNA helicase RhlB (421 aa).

A Q motif motif is present at residues 9–37; sequence QKFSDFALHAKVIEALENKGFHYCTPIQA. Residues 40-219 enclose the Helicase ATP-binding domain; it reads LPLTLAGRDV…FEQMNNAEYV (180 aa). 53–60 contacts ATP; the sequence is AQTGTGKT. Residues 165–168 carry the DEAD box motif; it reads DEAD. The 146-residue stretch at 245–390 folds into the Helicase C-terminal domain; the sequence is RLLQTLIEEE…QSKYNPDALL (146 aa). A disordered region spans residues 386–421; it reads PDALLSELPPPKRLTRARSGNGPRRTGAPRNRRRPG. Low complexity predominate over residues 405 to 414; sequence GNGPRRTGAP.

This sequence belongs to the DEAD box helicase family. RhlB subfamily. In terms of assembly, component of the RNA degradosome, which is a multiprotein complex involved in RNA processing and mRNA degradation.

The protein resides in the cytoplasm. It catalyses the reaction ATP + H2O = ADP + phosphate + H(+). Its function is as follows. DEAD-box RNA helicase involved in RNA degradation. Has RNA-dependent ATPase activity and unwinds double-stranded RNA. The sequence is that of ATP-dependent RNA helicase RhlB from Enterobacter sp. (strain 638).